A 363-amino-acid chain; its full sequence is tRNA dimethylallyltransferase (363 aa).

65–72 (GPTASGKS) contacts ATP. Position 67–72 (67–72 (TASGKS)) interacts with substrate. 2 interaction with substrate tRNA regions span residues 90 to 93 (DSMQ) and 214 to 218 (QRLIR).

Belongs to the IPP transferase family. As to quaternary structure, monomer. The cofactor is Mg(2+).

It catalyses the reaction adenosine(37) in tRNA + dimethylallyl diphosphate = N(6)-dimethylallyladenosine(37) in tRNA + diphosphate. Functionally, catalyzes the transfer of a dimethylallyl group onto the adenine at position 37 in tRNAs that read codons beginning with uridine, leading to the formation of N6-(dimethylallyl)adenosine (i(6)A). The sequence is that of tRNA dimethylallyltransferase from Rickettsia rickettsii (strain Sheila Smith).